The sequence spans 714 residues: Elongation factor G-like protein (714 aa).

The tr-type G domain maps to glycine 21 to methionine 289. The G1 stretch occupies residues glycine 30–threonine 37. A GTP-binding site is contributed by glycine 30–threonine 37. Residues glutamine 73–glycine 77 form a G2 region. Positions aspartate 94 to glycine 97 are G3. Residues aspartate 94 to tyrosine 98 and threonine 148 to aspartate 151 contribute to the GTP site. The tract at residues threonine 148–aspartate 151 is G4. The tract at residues cysteine 267–serine 269 is G5.

It belongs to the TRAFAC class translation factor GTPase superfamily. Classic translation factor GTPase family. EF-G/EF-2 subfamily.

The polypeptide is Elongation factor G-like protein (Mycobacterium tuberculosis (strain CDC 1551 / Oshkosh)).